The chain runs to 269 residues: MPDFSMSNLAVAFSITLAAGLFTVLGSGLVMFSKTPNPRVLSFGLAFAGGAMVYVSLTEIFSKSSEAFAEIYDKDHAFAAATMAFLAGMGGIALIDRLVPNPHETLDAQDPSFQESKRRHIARVGMMAAFAITAHNFPEGLATFFATLENPAVGMPLALAIAIHNIPEGISIAAPVYFATRSRKKTVWACLLSGLAEPLGAALGYLVLQPFLSPAVFGSVFGVIAGVMVFLALDELLPAAKRYSDGHETVYGLTTGMAVIAVSLVLFHF.

8 helical membrane-spanning segments follow: residues 12–32, 41–61, 75–95, 126–146, 152–172, 187–207, 211–231, and 249–269; these read AFSITLAAGLFTVLGSGLVMF, LSFGLAFAGGAMVYVSLTEIF, DHAFAAATMAFLAGMGGIALI, MMAAFAITAHNFPEGLATFFA, AVGMPLALAIAIHNIPEGISI, VWACLLSGLAEPLGAALGYLV, FLSPAVFGSVFGVIAGVMVFL, and TVYGLTTGMAVIAVSLVLFHF. The Fe(2+) site is built by N136 and E139. Zn(2+) is bound by residues E139 and H164. Residues N165, E168, and E197 each coordinate Fe(2+). Residue E168 participates in Zn(2+) binding.

It belongs to the ZIP transporter (TC 2.A.5) family. ZupT subfamily.

It is found in the cell inner membrane. The catalysed reaction is Zn(2+)(in) = Zn(2+)(out). In terms of biological role, mediates zinc uptake. May also transport other divalent cations. The polypeptide is Zinc transporter ZupT (Neisseria meningitidis serogroup B (strain ATCC BAA-335 / MC58)).